The primary structure comprises 1893 residues: CDK5 regulatory subunit-associated protein 2 (1893 aa).

The interval 51 to 94 (TVSPTRARNMKDFENQITELKKENFNLKLRIYFLEERMQQEFHG) is CM1 motif; interacts with the gTuRC. Residues 58-196 (RNMKDFENQI…TEKALRLRLE (139 aa)) are interaction with NCKAP5L. Position 547 is a phosphoserine (S547). The segment at 926–1208 (PGITNREAKK…LENLKQQLEE (283 aa)) is interaction with MAPRE1. T1001 bears the Phosphothreonine mark. Disordered regions lie at residues 1015-1071 (AAYQ…NPED) and 1084-1105 (SKSQ…SINT). Positions 1034 to 1048 (WRDKEMDSDQQRSYE) are enriched in basic and acidic residues. S1238 is modified (phosphoserine). Residues 1347 to 1381 (LPESPEPSASHALSDYETSEKSFFSRDQKQDNETE) form a disordered region. Positions 1364–1381 (TSEKSFFSRDQKQDNETE) are enriched in basic and acidic residues. Position 1490 is a phosphoserine (S1490). 2 stretches are compositionally biased toward basic and acidic residues: residues 1500–1519 (SVKE…ERHN) and 1651–1661 (PDKHDGDKYPM). Disordered stretches follow at residues 1500 to 1521 (SVKE…HNQQ), 1646 to 1706 (EVPL…ATST), and 1754 to 1774 (QTQE…PHPA). Phosphoserine is present on residues S1663 and S1666. 2 stretches are compositionally biased toward polar residues: residues 1663-1706 (SDNS…ATST) and 1754-1766 (QTQE…SQEL). Residues 1726–1768 (HVLGLIEDYEALLKQISQGQRLLAEMDIQTQEAPSSTSQELGT) are interaction with CDK5R1. The segment at 1726-1893 (HVLGLIEDYE…GTCSPSRPGS (168 aa)) is interaction with PCNT and AKAP9. Residues 1861–1870 (VVTHKILRKA) form a required for centrosomal attachment, Golgi localization and CALM1 interaction region. S1893 carries the post-translational modification Phosphoserine.

Homodimer. Interacts with CDK5R1 (p35 form). CDK5RAP1, CDK5RAP2 and CDK5RAP3 show competitive binding to CDK5R1. May form a complex with CDK5R1 and CDK5. Interacts with pericentrin/PCNT; the interaction is leading to centrosomal and Golgi localization of CDK5RAP2 and PCNT. Interacts with AKAP9; the interaction targets CDK5RAP2 and AKAP9 to Golgi apparatus. Interacts with MAPRE1; the interaction is direct and targets CDK5RAP2 and EB1/MAPRE1 to microtubule plus ends. Interacts with TUBG1; the interaction is leading to the centrosomal localization of CDK5RAP2 and TUBG1. Interacts with TUBGCP3. Interacts with CALM1. Interacts with CDC20. Interacts with CEP68; degradation of CEP68 in early mitosis leads to removal of CDK5RAP2 from the centrosome which promotes centriole disengagement and subsequent centriole separation. Interacts with NCKAP5L. Forms a pericentrosomal complex with AKAP9, MAPRE1 and PDE4DIP isoform 13/MMG8/SMYLE; within this complex, MAPRE1 binding to CDK5RAP2 may be mediated by PDE4DIP. Interacts with LGALS3BP; this interaction may connect the pericentrosomal complex to the gamma-tubulin ring complex (gTuRC) to promote microtubule assembly and acetylation. Interacts with CCDC66. Associates (via CM1 motif) with TUBGCP2 of the gTuRC; the interaction plays a role in gTuRC activation. Post-translationally, phosphorylated in vitro by CDK5. Widely expressed. Expressed in heart, brain, placenta, lung, liver, skeletal muscle, kidney and pancreas.

It is found in the cytoplasm. The protein resides in the cytoskeleton. It localises to the microtubule organizing center. The protein localises to the centrosome. Its subcellular location is the golgi apparatus. In terms of biological role, potential regulator of CDK5 activity via its interaction with CDK5R1. Negative regulator of centriole disengagement (licensing) which maintains centriole engagement and cohesion. Involved in regulation of mitotic spindle orientation. Plays a role in the spindle checkpoint activation by acting as a transcriptional regulator of both BUBR1 and MAD2 promoter. Together with EB1/MAPRE1, may promote microtubule polymerization, bundle formation, growth and dynamics at the plus ends. Regulates centrosomal maturation by recruitment of the gamma-tubulin ring complex (gTuRC) onto centrosomes. In complex with PDE4DIP isoform 13/MMG8/SMYLE, MAPRE1 and AKAP9, contributes to microtubules nucleation and extension from the centrosome to the cell periphery. Required for the recruitment of AKAP9 to centrosomes. Plays a role in neurogenesis. In Homo sapiens (Human), this protein is CDK5 regulatory subunit-associated protein 2 (CDK5RAP2).